The chain runs to 522 residues: 2-isopropylmalate synthase (522 aa).

Residues 5–267 (VIIFDTTLRD…ETGINAKEIH (263 aa)) enclose the Pyruvate carboxyltransferase domain. Positions 14, 202, 204, and 238 each coordinate Mn(2+). The segment at 392–522 (QLQQLVVQSD…MHKNRELGGV (131 aa)) is regulatory domain.

The protein belongs to the alpha-IPM synthase/homocitrate synthase family. LeuA type 1 subfamily. As to quaternary structure, homodimer. The cofactor is Mn(2+).

Its subcellular location is the cytoplasm. The enzyme catalyses 3-methyl-2-oxobutanoate + acetyl-CoA + H2O = (2S)-2-isopropylmalate + CoA + H(+). The protein operates within amino-acid biosynthesis; L-leucine biosynthesis; L-leucine from 3-methyl-2-oxobutanoate: step 1/4. Functionally, catalyzes the condensation of the acetyl group of acetyl-CoA with 3-methyl-2-oxobutanoate (2-ketoisovalerate) to form 3-carboxy-3-hydroxy-4-methylpentanoate (2-isopropylmalate). The chain is 2-isopropylmalate synthase from Shewanella sp. (strain MR-7).